The primary structure comprises 1399 residues: DNA-directed RNA polymerase subunit beta' (1399 aa).

Cys70, Cys72, Cys85, and Cys88 together coordinate Zn(2+). Mg(2+) contacts are provided by Asp460, Asp462, and Asp464. 4 residues coordinate Zn(2+): Cys814, Cys888, Cys895, and Cys898.

Belongs to the RNA polymerase beta' chain family. As to quaternary structure, the RNAP catalytic core consists of 2 alpha, 1 beta, 1 beta' and 1 omega subunit. When a sigma factor is associated with the core the holoenzyme is formed, which can initiate transcription. It depends on Mg(2+) as a cofactor. Zn(2+) serves as cofactor.

The enzyme catalyses RNA(n) + a ribonucleoside 5'-triphosphate = RNA(n+1) + diphosphate. DNA-dependent RNA polymerase catalyzes the transcription of DNA into RNA using the four ribonucleoside triphosphates as substrates. This Pseudomonas putida (strain ATCC 700007 / DSM 6899 / JCM 31910 / BCRC 17059 / LMG 24140 / F1) protein is DNA-directed RNA polymerase subunit beta'.